The chain runs to 124 residues: Large ribosomal subunit protein uL18 (124 aa).

It belongs to the universal ribosomal protein uL18 family. In terms of assembly, part of the 50S ribosomal subunit; part of the 5S rRNA/L5/L18/L25 subcomplex. Contacts the 5S and 23S rRNAs.

Functionally, this is one of the proteins that bind and probably mediate the attachment of the 5S RNA into the large ribosomal subunit, where it forms part of the central protuberance. The chain is Large ribosomal subunit protein uL18 from Koribacter versatilis (strain Ellin345).